The primary structure comprises 594 residues: Fidgetin-like protein 1 (594 aa).

Disordered regions lie at residues 1–79 (MYSP…DDEL) and 239–261 (QSIG…KRCS). Residues 56–73 (PSDSAQQQPPFKSRSQQN) show a composition bias toward polar residues. ATP contacts are provided by residues Ala319 and 359-364 (GTGKTM).

Belongs to the AAA ATPase family. Hexamer. Mg(2+) serves as cofactor. In terms of tissue distribution, expressed in germ cells.

It is found in the nucleus. It carries out the reaction ATP + H2O = ADP + phosphate + H(+). In terms of biological role, has a role in spindle assembly which acts in the progression through mitosis during embryogenesis. Required for fertility. This is Fidgetin-like protein 1 (figl-1) from Caenorhabditis elegans.